A 496-amino-acid polypeptide reads, in one-letter code: Glutamyl-tRNA(Gln) amidotransferase subunit A (496 aa).

Residues Lys79 and Ser159 each act as charge relay system in the active site. Ser183 acts as the Acyl-ester intermediate in catalysis.

This sequence belongs to the amidase family. GatA subfamily. Heterotrimer of A, B and C subunits.

The enzyme catalyses L-glutamyl-tRNA(Gln) + L-glutamine + ATP + H2O = L-glutaminyl-tRNA(Gln) + L-glutamate + ADP + phosphate + H(+). Its function is as follows. Allows the formation of correctly charged Gln-tRNA(Gln) through the transamidation of misacylated Glu-tRNA(Gln) in organisms which lack glutaminyl-tRNA synthetase. The reaction takes place in the presence of glutamine and ATP through an activated gamma-phospho-Glu-tRNA(Gln). The polypeptide is Glutamyl-tRNA(Gln) amidotransferase subunit A (Ruegeria pomeroyi (strain ATCC 700808 / DSM 15171 / DSS-3) (Silicibacter pomeroyi)).